The primary structure comprises 197 residues: RNA pyrophosphohydrolase (197 aa).

The Nudix hydrolase domain occupies 6 to 149 (GYRPNVGIVI…KRDVYRKAMK (144 aa)). The Nudix box motif lies at 38-59 (GGINDGETPEQAMYRELYEEVG). The interval 165 to 197 (LSTNNNDEKKANYSAKKPYSPYRNQDKKRKTRV) is disordered.

This sequence belongs to the Nudix hydrolase family. RppH subfamily. A divalent metal cation serves as cofactor.

Accelerates the degradation of transcripts by removing pyrophosphate from the 5'-end of triphosphorylated RNA, leading to a more labile monophosphorylated state that can stimulate subsequent ribonuclease cleavage. This is RNA pyrophosphohydrolase from Mannheimia succiniciproducens (strain KCTC 0769BP / MBEL55E).